The chain runs to 164 residues: MDLLYFFLLIWPPYVANGSAVLANKFKIRHPIDFGKTFVDGRRIFGDGKTYEGFLIGLSTGTFIGYAPNLLYKHLSLLDAFVLSIAALLGDLFGAFIKRRLCMPRGYPAFPLDQLDFLLTSLAVYTLYKDISVEYIIAAVIITPLIHRITNYIAYYLRLKKEPW.

4 consecutive transmembrane segments (helical) span residues 3–23, 51–71, 77–97, and 122–142; these read LLYFFLLIWPPYVANGSAVLA, YEGFLIGLSTGTFIGYAPNLL, LLDAFVLSIAALLGDLFGAFI, and LAVYTLYKDISVEYIIAAVII.

This sequence belongs to the CDP-archaeol synthase family. The cofactor is Mg(2+).

Its subcellular location is the cell membrane. The catalysed reaction is 2,3-bis-O-(geranylgeranyl)-sn-glycerol 1-phosphate + CTP + H(+) = CDP-2,3-bis-O-(geranylgeranyl)-sn-glycerol + diphosphate. The protein operates within membrane lipid metabolism; glycerophospholipid metabolism. Functionally, catalyzes the formation of CDP-2,3-bis-(O-geranylgeranyl)-sn-glycerol (CDP-archaeol) from 2,3-bis-(O-geranylgeranyl)-sn-glycerol 1-phosphate (DGGGP) and CTP. This reaction is the third ether-bond-formation step in the biosynthesis of archaeal membrane lipids. The chain is CDP-archaeol synthase from Pyrobaculum islandicum (strain DSM 4184 / JCM 9189 / GEO3).